We begin with the raw amino-acid sequence, 31 residues long: Photosystem II reaction center protein T (31 aa).

A helical transmembrane segment spans residues 3–23 (ALVYTFLLVGTLGIIFFSIFF).

This sequence belongs to the PsbT family. PSII is composed of 1 copy each of membrane proteins PsbA, PsbB, PsbC, PsbD, PsbE, PsbF, PsbH, PsbI, PsbJ, PsbK, PsbL, PsbM, PsbT, PsbY, PsbZ, Psb30/Ycf12, at least 3 peripheral proteins of the oxygen-evolving complex and a large number of cofactors. It forms dimeric complexes.

It is found in the plastid. Its subcellular location is the chloroplast thylakoid membrane. Its function is as follows. Found at the monomer-monomer interface of the photosystem II (PS II) dimer, plays a role in assembly and dimerization of PSII. PSII is a light-driven water plastoquinone oxidoreductase, using light energy to abstract electrons from H(2)O, generating a proton gradient subsequently used for ATP formation. This chain is Photosystem II reaction center protein T, found in Bigelowiella natans (Pedinomonas minutissima).